Reading from the N-terminus, the 458-residue chain is GTPase Obg (458 aa).

The Obg domain maps to 1-157 (MSFLDRVKIY…ITLYLELKVL (157 aa)). Residues 158 to 326 (ADLGLVGFPN…VLNEIVKVIS (169 aa)) form the OBG-type G domain. GTP is bound by residues 164–171 (GFPNAGKS), 189–193 (FTTLN), 210–213 (DIPG), 280–283 (NKAD), and 307–309 (SAA). Residues Ser-171 and Thr-191 each coordinate Mg(2+). Residues 341-419 (AVHGVEPLFK…VGQKEFEWSG (79 aa)) enclose the OCT domain. The disordered stretch occupies residues 420–458 (TELDSERAEQPDFEGYKRRTTQAERLEKRRQRRLKKEEK). Basic and acidic residues predominate over residues 423–446 (DSERAEQPDFEGYKRRTTQAERLE). Over residues 447–458 (KRRQRRLKKEEK) the composition is skewed to basic residues.

Belongs to the TRAFAC class OBG-HflX-like GTPase superfamily. OBG GTPase family. In terms of assembly, monomer. It depends on Mg(2+) as a cofactor.

It is found in the cytoplasm. An essential GTPase which binds GTP, GDP and possibly (p)ppGpp with moderate affinity, with high nucleotide exchange rates and a fairly low GTP hydrolysis rate. Plays a role in control of the cell cycle, stress response, ribosome biogenesis and in those bacteria that undergo differentiation, in morphogenesis control. This Elusimicrobium minutum (strain Pei191) protein is GTPase Obg.